The primary structure comprises 338 residues: HTH-type transcriptional regulator SyrM 1 (338 aa).

An HTH lysR-type domain is found at 35–92 (LDLNTLLALEALLEHRNVTQAARHLGLSQPSVSRALIRLRGVFNDDLLVRGSSGMVPT). Residues 52 to 72 (VTQAARHLGLSQPSVSRALIR) constitute a DNA-binding region (H-T-H motif).

Belongs to the LysR transcriptional regulatory family.

In terms of biological role, transcriptional activator that regulates the expression of genes involved in symbiosis. Among other targets it acts on the nolWBTUV operon. This Sinorhizobium fredii (strain NBRC 101917 / NGR234) protein is HTH-type transcriptional regulator SyrM 1 (syrM1).